The sequence spans 82 residues: MDKKEEENLIKRINELTKISRERELTPDELEERKKLRSAFLENFRAGFRQQLEDTVVIDKDGKEVTSEKAKEAQRRKGLRKD.

The interval 61–82 is disordered; that stretch reads DGKEVTSEKAKEAQRRKGLRKD.

This sequence belongs to the UPF0291 family.

It localises to the cytoplasm. This is UPF0291 protein LJ_1507 from Lactobacillus johnsonii (strain CNCM I-12250 / La1 / NCC 533).